The following is a 155-amino-acid chain: Ribosome maturation factor RimP (155 aa).

This sequence belongs to the RimP family.

The protein localises to the cytoplasm. Its function is as follows. Required for maturation of 30S ribosomal subunits. This chain is Ribosome maturation factor RimP, found in Listeria monocytogenes serotype 4a (strain HCC23).